The chain runs to 225 residues: MTVLAVTGTDTGVGKTVTTAALACAARLARRDVAVCKPVQTGTIDGDDDLGEVRRLSGVTALHGGWRYPEPLAPVAAAGRAGAPLPTRTELVGSVRAVDAAGRLTIVEGAGGLLVALGADGVTLRDLAHDLGAQVLIVVSPGLGTLNHTALTLEALAAHGLSCAGLVIGAWPAEPGVAELDNRTALEALAPVRAVLPAGAGAASPERFEALSAAAFDADWITSLS.

12 to 17 (GVGKTV) lines the ATP pocket. T16 contributes to the Mg(2+) binding site. K37 is a catalytic residue. Position 41 (T41) interacts with substrate. ATP is bound by residues D49, 108 to 111 (EGAG), and 197 to 199 (PAG). Mg(2+) is bound by residues D49 and E108.

It belongs to the dethiobiotin synthetase family. In terms of assembly, homodimer. Mg(2+) serves as cofactor.

The protein resides in the cytoplasm. It carries out the reaction (7R,8S)-7,8-diammoniononanoate + CO2 + ATP = (4R,5S)-dethiobiotin + ADP + phosphate + 3 H(+). It participates in cofactor biosynthesis; biotin biosynthesis; biotin from 7,8-diaminononanoate: step 1/2. Its function is as follows. Catalyzes a mechanistically unusual reaction, the ATP-dependent insertion of CO2 between the N7 and N8 nitrogen atoms of 7,8-diaminopelargonic acid (DAPA, also called 7,8-diammoniononanoate) to form a ureido ring. This Mycolicibacterium smegmatis (strain ATCC 700084 / mc(2)155) (Mycobacterium smegmatis) protein is ATP-dependent dethiobiotin synthetase BioD.